A 200-amino-acid chain; its full sequence is Probable E3 ubiquitin-protein ligase ATL45 (200 aa).

The helical transmembrane segment at 26–46 (MVVILSALLCALVCVAGLAAV) threads the bilayer. The RING-type; atypical zinc finger occupies 113–155 (CAICITEFSEGEEIRILPLCSHAFHVACIDKWLTSRSSCPSCR).

This sequence belongs to the RING-type zinc finger family. ATL subfamily. As to quaternary structure, interacts with BIK1.

The protein resides in the membrane. The enzyme catalyses S-ubiquitinyl-[E2 ubiquitin-conjugating enzyme]-L-cysteine + [acceptor protein]-L-lysine = [E2 ubiquitin-conjugating enzyme]-L-cysteine + N(6)-ubiquitinyl-[acceptor protein]-L-lysine.. The protein operates within protein modification; protein ubiquitination. E3 ubiquitin-protein ligase that possess E3 ubiquitin ligase activity in vitro and mediates protein monoubiquitination. Triggers the monoubiquitination of phosphorylated BIK1 in response to pathogen-associated molecular pattern (PAMP) detection. May be involved in the early steps of the plant defense signaling pathway. The protein is Probable E3 ubiquitin-protein ligase ATL45 of Arabidopsis thaliana (Mouse-ear cress).